An 878-amino-acid chain; its full sequence is Pyruvate, phosphate dikinase (878 aa).

Residues 1–347 (MKKLIYYFGS…LYILQTRTAK (347 aa)) form an N-terminal region. R96 contributes to the ATP binding site. A linker 1 region spans residues 348 to 404 (RTAIAAIKIAVQMVEEKLISKEQALMRIDPESLNQLLHTRIDYSKGLTSIADGLPAS). The interval 405–502 (PGAATGIIVF…ILKQDDIITI (98 aa)) is central. Residue T457 is modified to Phosphothreonine; by PDRP1. H459 serves as the catalytic Tele-phosphohistidine intermediate. Residues 503–537 (DGGTGKVFLGAVPLIQPTFSEESKLILEWADETSK) are linker 2. The interval 538-878 (LKIRTNAETV…AAAQAKIKHG (341 aa)) is C-terminal. R565, R621, E749, G770, T771, N772, and D773 together coordinate substrate. E749 contributes to the Mg(2+) binding site. D773 is a binding site for Mg(2+). C835 serves as the catalytic Proton donor.

It belongs to the PEP-utilizing enzyme family. As to quaternary structure, homodimer. It depends on Mg(2+) as a cofactor. Post-translationally, phosphorylation of Thr-457 in the dark inactivates the enzyme. Dephosphorylation upon light stimulation reactivates the enzyme.

The enzyme catalyses pyruvate + phosphate + ATP = phosphoenolpyruvate + AMP + diphosphate + H(+). With respect to regulation, activated by light-induced dephosphorylation. Inhibited by dark-induced phosphorylation. Both reactions are catalyzed by PDRP1. Functionally, catalyzes the reversible phosphorylation of pyruvate and phosphate. In Rickettsia bellii (strain RML369-C), this protein is Pyruvate, phosphate dikinase (ppdK).